We begin with the raw amino-acid sequence, 912 residues long: Protein translocase subunit SecA (912 aa).

ATP-binding positions include Q87, G105–T109, and D508. The interval Q855–S912 is disordered. Positions 896, 898, 907, and 908 each coordinate Zn(2+). Positions K902–S912 are enriched in basic residues.

The protein belongs to the SecA family. As to quaternary structure, monomer and homodimer. Part of the essential Sec protein translocation apparatus which comprises SecA, SecYEG and auxiliary proteins SecDF-YajC and YidC. Zn(2+) is required as a cofactor.

It is found in the cell inner membrane. It localises to the cytoplasm. The enzyme catalyses ATP + H2O + cellular proteinSide 1 = ADP + phosphate + cellular proteinSide 2.. Functionally, part of the Sec protein translocase complex. Interacts with the SecYEG preprotein conducting channel. Has a central role in coupling the hydrolysis of ATP to the transfer of proteins into and across the cell membrane, serving both as a receptor for the preprotein-SecB complex and as an ATP-driven molecular motor driving the stepwise translocation of polypeptide chains across the membrane. This is Protein translocase subunit SecA from Xanthomonas campestris pv. campestris (strain 8004).